Consider the following 305-residue polypeptide: Sulfate adenylyltransferase subunit 2 (305 aa).

It belongs to the PAPS reductase family. CysD subfamily. As to quaternary structure, heterodimer composed of CysD, the smaller subunit, and CysN.

It catalyses the reaction sulfate + ATP + H(+) = adenosine 5'-phosphosulfate + diphosphate. The protein operates within sulfur metabolism; hydrogen sulfide biosynthesis; sulfite from sulfate: step 1/3. Its function is as follows. With CysN forms the ATP sulfurylase (ATPS) that catalyzes the adenylation of sulfate producing adenosine 5'-phosphosulfate (APS) and diphosphate, the first enzymatic step in sulfur assimilation pathway. APS synthesis involves the formation of a high-energy phosphoric-sulfuric acid anhydride bond driven by GTP hydrolysis by CysN coupled to ATP hydrolysis by CysD. In Azotobacter vinelandii (strain DJ / ATCC BAA-1303), this protein is Sulfate adenylyltransferase subunit 2.